The chain runs to 302 residues: Aspartate carbamoyltransferase catalytic subunit (302 aa).

Carbamoyl phosphate contacts are provided by arginine 54 and threonine 55. Lysine 82 lines the L-aspartate pocket. Arginine 104, histidine 132, and glutamine 135 together coordinate carbamoyl phosphate. Arginine 165 and arginine 217 together coordinate L-aspartate. Residues glycine 257 and proline 258 each coordinate carbamoyl phosphate.

The protein belongs to the aspartate/ornithine carbamoyltransferase superfamily. ATCase family. Heterododecamer (2C3:3R2) of six catalytic PyrB chains organized as two trimers (C3), and six regulatory PyrI chains organized as three dimers (R2).

It carries out the reaction carbamoyl phosphate + L-aspartate = N-carbamoyl-L-aspartate + phosphate + H(+). The protein operates within pyrimidine metabolism; UMP biosynthesis via de novo pathway; (S)-dihydroorotate from bicarbonate: step 2/3. In terms of biological role, catalyzes the condensation of carbamoyl phosphate and aspartate to form carbamoyl aspartate and inorganic phosphate, the committed step in the de novo pyrimidine nucleotide biosynthesis pathway. This Thermus thermophilus (strain ATCC BAA-163 / DSM 7039 / HB27) protein is Aspartate carbamoyltransferase catalytic subunit.